Reading from the N-terminus, the 529-residue chain is MLLIIVVLVGTLIYFLSFHNKKRHGLPPGPKPLPIIGNIKDMPPKGVAAFRHWLKHKDTYGPVSSVSVLGQPLILIHDREAAHYLFDKSSGKSSGRPSANFGGRLCGFDQILSLQQYGDTFKRHRKLVHRQMGTRAGAAKFRQIQDVESHRFLLRSLDNPGNLMEHIRKEAGGVILKATYGYSIEPHKPDPLVHLVEFMVEGISIVVVPMKFVVDFLPWLEYIPECLPGMSFKARARRWRTILNNTIEAPYQFVRQQMAKGIQFESYVSSLLTQEKLKGGNDTLDETYEADIKRTAAIMYAGGADTTVSTIQSFVLAMMVYPEVLKKAQAEIDNVIGPDRLPGFEDRENLPYINSMVKESLRWMPAVPMGAAHKADDDIYYGDLCIPKGSFLLPNVWWFLHNPETYQDPERYDPDRYLEPRNEPDPDSNCWGYGRRICPGRLLADESIFIVIARVVAAFDIEKDVDEQGNTIEPKVEFTTEGALSRPVDYPYRIKPRNAKCVDLIRAVEKEHPWDKGDASLLQQDMVVL.

The chain crosses the membrane as a helical span at residues 2–19 (LLIIVVLVGTLIYFLSFH). 2 N-linked (GlcNAc...) asparagine glycosylation sites follow: asparagine 244 and asparagine 281. Cysteine 438 is a heme binding site.

This sequence belongs to the cytochrome P450 family. The cofactor is heme.

The protein localises to the membrane. It carries out the reaction (-)-longiborneol + reduced [NADPH--hemoprotein reductase] + O2 = culmorin + oxidized [NADPH--hemoprotein reductase] + H2O + H(+). It functions in the pathway mycotoxin biosynthesis. Cytochrome P450 monooxygenase involved in the biosynthesis of culmorin, a tricyclic sesquiterpene diol reported to have antifungal activity and some phytotoxicity to wheat coleoptile tissue, contributing to Fusarium head blight disease. The terpene cyclase CLM1 is responsible for the cyclization of farnesyl diphosphate into the intermediate longiborneol. Longiborneol is then hydroxylated in a regio- and endo-stereoselective manner at position C-11 by the cytochrome P450 monooxygenase CLM2 to produce culmorin. Additional non-specific oxygenases are also able to hydroxylate longiborneol at other sites than C-11 leading to 3-hydroxylongiborneol, 5-hydroxylongiborneol, 12-hydroxylongiborneol and 15-hydroxylongiborneol. Moreover, another oxygenase capable of installing a C-11 exo-hydroxy group in longiborneol can also yield 11-epi-acetylculmorin. The production of these longiborneol derivatives is dwarfed by the high abundance of culmorin, suggesting that CLM2 displays superior enzymatic activity to the unidentified, possibly promiscuous, additional oxygenases. The protein is Cytochrome P450 monooxygenase CLM2 of Gibberella zeae (strain ATCC MYA-4620 / CBS 123657 / FGSC 9075 / NRRL 31084 / PH-1) (Wheat head blight fungus).